The chain runs to 88 residues: Apolipoprotein C-I (88 aa).

The signal sequence occupies residues Met-1–Ala-26.

It belongs to the apolipoprotein C1 family.

Its subcellular location is the secreted. Inhibitor of lipoprotein binding to the low density lipoprotein (LDL) receptor, LDL receptor-related protein, and very low density lipoprotein (VLDL) receptor. Associates with high density lipoproteins (HDL) and the triacylglycerol-rich lipoproteins in the plasma and makes up about 10% of the protein of the VLDL and 2% of that of HDL. Appears to interfere directly with fatty acid uptake and is also the major plasma inhibitor of cholesteryl ester transfer protein (CETP). Binds free fatty acids and reduces their intracellular esterification. Modulates the interaction of APOE with beta-migrating VLDL and inhibits binding of beta-VLDL to the LDL receptor-related protein. This Ursus maritimus (Polar bear) protein is Apolipoprotein C-I (APOC1).